We begin with the raw amino-acid sequence, 171 residues long: Large ribosomal subunit protein uL10 (171 aa).

Belongs to the universal ribosomal protein uL10 family. Part of the ribosomal stalk of the 50S ribosomal subunit. The N-terminus interacts with L11 and the large rRNA to form the base of the stalk. The C-terminus forms an elongated spine to which L12 dimers bind in a sequential fashion forming a multimeric L10(L12)X complex.

Forms part of the ribosomal stalk, playing a central role in the interaction of the ribosome with GTP-bound translation factors. The polypeptide is Large ribosomal subunit protein uL10 (Sphingopyxis alaskensis (strain DSM 13593 / LMG 18877 / RB2256) (Sphingomonas alaskensis)).